The following is a 277-amino-acid chain: Large ribosomal subunit protein uL2c (277 aa).

The interval N226–P249 is disordered. The span at D229–P246 shows a compositional bias: basic and acidic residues.

Belongs to the universal ribosomal protein uL2 family. Part of the 50S ribosomal subunit.

The protein localises to the plastid. It is found in the chloroplast. This is Large ribosomal subunit protein uL2c (rpl2) from Physcomitrium patens (Spreading-leaved earth moss).